The chain runs to 437 residues: GTPase Der (437 aa).

2 consecutive EngA-type G domains span residues 3-168 and 178-353; these read PLIA…PETE and IQLA…QNRS. Residues 9–16, 56–60, 120–123, 184–191, 231–235, and 296–299 each bind GTP; these read GRPNVGKS, DTGGY, NKVE, DTAGL, and NKWD. The KH-like domain occupies 354 to 437; the sequence is RKISTSVLNK…VPISMRFMQK (84 aa).

It belongs to the TRAFAC class TrmE-Era-EngA-EngB-Septin-like GTPase superfamily. EngA (Der) GTPase family. In terms of assembly, associates with the 50S ribosomal subunit.

Its function is as follows. GTPase that plays an essential role in the late steps of ribosome biogenesis. The polypeptide is GTPase Der (Pelodictyon phaeoclathratiforme (strain DSM 5477 / BU-1)).